The following is a 518-amino-acid chain: 2,3-bisphosphoglycerate-independent phosphoglycerate mutase (518 aa).

The Mn(2+) site is built by Asp14 and Ser64. Ser64 acts as the Phosphoserine intermediate in catalysis. Substrate-binding positions include His125, 155-156, Arg187, Arg193, 264-267, and Lys337; these read RD and RPDR. 5 residues coordinate Mn(2+): Asp404, His408, Asp445, His446, and His467.

The protein belongs to the BPG-independent phosphoglycerate mutase family. Mn(2+) is required as a cofactor.

The enzyme catalyses (2R)-2-phosphoglycerate = (2R)-3-phosphoglycerate. It participates in carbohydrate degradation; glycolysis; pyruvate from D-glyceraldehyde 3-phosphate: step 3/5. Functionally, catalyzes the interconversion of 2-phosphoglycerate and 3-phosphoglycerate. This is 2,3-bisphosphoglycerate-independent phosphoglycerate mutase from Methanococcoides burtonii (strain DSM 6242 / NBRC 107633 / OCM 468 / ACE-M).